The primary structure comprises 392 residues: Chorismate synthase (392 aa).

NADP(+)-binding residues include arginine 40 and arginine 46. FMN contacts are provided by residues 129 to 131 (RSS), 257 to 258 (QA), glycine 302, 317 to 321 (KPIAT), and arginine 343.

It belongs to the chorismate synthase family. In terms of assembly, homotetramer. FMNH2 serves as cofactor.

It carries out the reaction 5-O-(1-carboxyvinyl)-3-phosphoshikimate = chorismate + phosphate. It functions in the pathway metabolic intermediate biosynthesis; chorismate biosynthesis; chorismate from D-erythrose 4-phosphate and phosphoenolpyruvate: step 7/7. Its function is as follows. Catalyzes the anti-1,4-elimination of the C-3 phosphate and the C-6 proR hydrogen from 5-enolpyruvylshikimate-3-phosphate (EPSP) to yield chorismate, which is the branch point compound that serves as the starting substrate for the three terminal pathways of aromatic amino acid biosynthesis. This reaction introduces a second double bond into the aromatic ring system. This chain is Chorismate synthase, found in Chloroherpeton thalassium (strain ATCC 35110 / GB-78).